The chain runs to 355 residues: Agamous-like MADS-box protein AGL81 (355 aa).

The interval 1–22 (MAIRSLPSSSRCSSSSSSSSYS) is disordered. The region spanning 26–68 (TSLSNRLETIFKKASELCTLCDIEACVIYYGPDGELKTWPPER) is the MADS-box domain. Basic and acidic residues predominate over residues 162-174 (VESQKHKETKPDH). A disordered region spans residues 162 to 186 (VESQKHKETKPDHQSLASSSLNHQT). Residues 176-186 (SLASSSLNHQT) are compositionally biased toward polar residues.

Interacts with MEE14/CBP1.

It is found in the nucleus. Probable transcription factor that may function in the maintenance of the proper function of the central cell in pollen tube attraction. In Arabidopsis thaliana (Mouse-ear cress), this protein is Agamous-like MADS-box protein AGL81.